The primary structure comprises 104 residues: uncharacterized protein (104 aa).

Disordered stretches follow at residues 1 to 20 (MTET…TTRK) and 83 to 104 (TASA…VAKK). A compositionally biased stretch (low complexity) spans 83–93 (TASASSSGKKV). The span at 94-104 (VASKKKVVAKK) shows a compositional bias: basic residues.

This is an uncharacterized protein from Dictyostelium discoideum (Social amoeba).